A 377-amino-acid chain; its full sequence is Anhydro-N-acetylmuramic acid kinase (377 aa).

ATP is bound at residue 19–26 (GTSLDGVD).

The protein belongs to the anhydro-N-acetylmuramic acid kinase family.

The enzyme catalyses 1,6-anhydro-N-acetyl-beta-muramate + ATP + H2O = N-acetyl-D-muramate 6-phosphate + ADP + H(+). Its pathway is amino-sugar metabolism; 1,6-anhydro-N-acetylmuramate degradation. It participates in cell wall biogenesis; peptidoglycan recycling. In terms of biological role, catalyzes the specific phosphorylation of 1,6-anhydro-N-acetylmuramic acid (anhMurNAc) with the simultaneous cleavage of the 1,6-anhydro ring, generating MurNAc-6-P. Is required for the utilization of anhMurNAc either imported from the medium or derived from its own cell wall murein, and thus plays a role in cell wall recycling. The polypeptide is Anhydro-N-acetylmuramic acid kinase (Roseobacter denitrificans (strain ATCC 33942 / OCh 114) (Erythrobacter sp. (strain OCh 114))).